The primary structure comprises 1031 residues: Error-prone DNA polymerase (1031 aa).

Belongs to the DNA polymerase type-C family. DnaE2 subfamily.

It localises to the cytoplasm. It carries out the reaction DNA(n) + a 2'-deoxyribonucleoside 5'-triphosphate = DNA(n+1) + diphosphate. DNA polymerase involved in damage-induced mutagenesis and translesion synthesis (TLS). It is not the major replicative DNA polymerase. This chain is Error-prone DNA polymerase, found in Pseudomonas syringae pv. tomato (strain ATCC BAA-871 / DC3000).